Here is a 20-residue protein sequence, read N- to C-terminus: Protein C activator (20 aa).

The 20-residue stretch at 1–20 folds into the Peptidase S1 domain; sequence VVGGDECNINEHRSLALMYA.

The protein belongs to the peptidase S1 family. Snake venom subfamily. As to quaternary structure, monomer. In terms of processing, glycosylated. Expressed by the venom gland.

It localises to the secreted. Inhibited by calcium. Functionally, snake venom serine protease that selectively cleaves the heavy chain of protein C (PROC). This activation is thrombomodulin-independent. The polypeptide is Protein C activator (Agkistrodon bilineatus (Cantil)).